Reading from the N-terminus, the 327-residue chain is Arabinose 5-phosphate isomerase KpsF (327 aa).

Residues 48–191 (VLNLIMNCKG…AIAMIHQRKF (144 aa)) enclose the SIS domain. Residue 63–68 (GMGKSG) coordinates ATP. Substrate contacts are provided by residues 82 to 83 (GT), histidine 89, histidine 95, 121 to 130 (KLVPSLKNFG), and 155 to 157 (HMA). A Zn(2+)-binding site is contributed by histidine 89. 2 CBS domains span residues 217-273 (MQHD…EGSL) and 282-327 (MTRE…RIFD).

Homotetramer.

The enzyme catalyses D-arabinose 5-phosphate = D-ribulose 5-phosphate. Inhibited by 10 uM zinc, cadmium or mercury ions. Functionally, involved in the biosynthesis of K-antigen capsules. Catalyzes the reversible aldol-ketol isomerization between D-ribulose 5-phosphate (Ru5P) and D-arabinose 5-phosphate (A5P). The protein is Arabinose 5-phosphate isomerase KpsF of Escherichia coli O6:H1 (strain CFT073 / ATCC 700928 / UPEC).